Consider the following 262-residue polypeptide: Calbindin (262 aa).

The residue at position 2 (Thr-2) is an N-acetylthreonine. 5 EF-hand domains span residues 12-47 (ISAA…LQQA), 54-89 (DLTP…EENF), 99-134 (KSSE…LLQK), 143-178 (KLTE…QENF), and 187-222 (MCAK…LCEK). Ca(2+) contacts are provided by Asp-25, Asp-27, Asn-29, Tyr-31, and Glu-36. Asp-112, Asp-114, Ser-116, Glu-123, Asp-156, Asn-158, Asp-160, Lys-162, Glu-167, Asp-200, Asp-202, Asn-204, Tyr-206, and Glu-211 together coordinate Ca(2+).

This sequence belongs to the calbindin family. In terms of tissue distribution, highly abundant in supporting cells. Also present in hair cells.

Functionally, buffers cytosolic calcium. May stimulate a membrane Ca(2+)-ATPase and a 3',5'-cyclic nucleotide phosphodiesterase. The chain is Calbindin (CALB1) from Gallus gallus (Chicken).